The following is a 29-amino-acid chain: Putative membrane protein PmrR (29 aa).

The helical transmembrane segment at 5–27 (VYESLTTVFSVLVVSSFLYIWFA) threads the bilayer.

It localises to the cell inner membrane. In terms of biological role, may bind to BasS and modulate its sensor kinase activity. This chain is Putative membrane protein PmrR (pmrR), found in Escherichia coli (strain K12).